A 190-amino-acid polypeptide reads, in one-letter code: Putative manganese efflux pump MntP (190 aa).

6 consecutive transmembrane segments (helical) span residues 5 to 25 (ALLALAVALAMDALAVAVATG), 41 to 61 (WHFGLFQAAMPIAGWFMGQGI), 64 to 84 (FVDAWAHWIAFGLLAFIGLKM), 105 to 125 (TSLIMLSVATSIDALAVGVTL), 127 to 147 (MLGLSIWMPAAVIGLVCLGLT), and 169 to 189 (ILGGAVLLGIGFKILHESGVF).

Belongs to the MntP (TC 9.B.29) family.

It is found in the cell inner membrane. Probably functions as a manganese efflux pump. This is Putative manganese efflux pump MntP from Oleidesulfovibrio alaskensis (strain ATCC BAA-1058 / DSM 17464 / G20) (Desulfovibrio alaskensis).